Reading from the N-terminus, the 521-residue chain is Bifunctional purine biosynthesis protein PurH (521 aa).

Positions 1–147 (MAKITRALIS…KNNADVTVVV (147 aa)) constitute an MGS-like domain.

Belongs to the PurH family.

It catalyses the reaction (6R)-10-formyltetrahydrofolate + 5-amino-1-(5-phospho-beta-D-ribosyl)imidazole-4-carboxamide = 5-formamido-1-(5-phospho-D-ribosyl)imidazole-4-carboxamide + (6S)-5,6,7,8-tetrahydrofolate. The enzyme catalyses IMP + H2O = 5-formamido-1-(5-phospho-D-ribosyl)imidazole-4-carboxamide. It participates in purine metabolism; IMP biosynthesis via de novo pathway; 5-formamido-1-(5-phospho-D-ribosyl)imidazole-4-carboxamide from 5-amino-1-(5-phospho-D-ribosyl)imidazole-4-carboxamide (10-formyl THF route): step 1/1. The protein operates within purine metabolism; IMP biosynthesis via de novo pathway; IMP from 5-formamido-1-(5-phospho-D-ribosyl)imidazole-4-carboxamide: step 1/1. The protein is Bifunctional purine biosynthesis protein PurH of Geotalea uraniireducens (strain Rf4) (Geobacter uraniireducens).